The chain runs to 271 residues: Mitochondrial distribution and morphology protein 12 (271 aa).

The SMP-LTD domain maps to Met1–Asn267. A Glycyl lysine isopeptide (Lys-Gly) (interchain with G-Cter in ubiquitin) cross-link involves residue Lys49.

The protein belongs to the MDM12 family. As to quaternary structure, component of the ER-mitochondria encounter structure (ERMES) or MDM complex, composed of MMM1, MDM10, MDM12 and MDM34. An MMM1 homodimer associates with one molecule of MDM12 on each side in a pairwise head-to-tail manner, and the SMP-LTD domains of MMM1 and MDM12 generate a continuous hydrophobic tunnel for phospholipid trafficking. Interacts with PUF3.

The protein resides in the mitochondrion outer membrane. The protein localises to the endoplasmic reticulum membrane. In terms of biological role, component of the ERMES/MDM complex, which serves as a molecular tether to connect the endoplasmic reticulum (ER) and mitochondria. Components of this complex are involved in the control of mitochondrial shape and protein biogenesis, and function in nonvesicular lipid trafficking between the ER and mitochondria. MDM12 is required for the interaction of the ER-resident membrane protein MMM1 and the outer mitochondrial membrane-resident beta-barrel protein MDM10. The MDM12-MMM1 subcomplex functions in the major beta-barrel assembly pathway that is responsible for biogenesis of all mitochondrial outer membrane beta-barrel proteins, and acts in a late step after the SAM complex. The MDM10-MDM12-MMM1 subcomplex further acts in the TOM40-specific pathway after the action of the MDM12-MMM1 complex. Essential for establishing and maintaining the structure of mitochondria and maintenance of mtDNA nucleoids. In Saccharomyces cerevisiae (strain AWRI1631) (Baker's yeast), this protein is Mitochondrial distribution and morphology protein 12.